Reading from the N-terminus, the 188-residue chain is Elongation factor P (188 aa).

At K34 the chain carries N6-(3,6-diaminohexanoyl)-5-hydroxylysine.

Belongs to the elongation factor P family. In terms of processing, may be beta-lysylated on the epsilon-amino group of Lys-34 by the combined action of EpmA and EpmB, and then hydroxylated on the C5 position of the same residue by EpmC (if this protein is present). Lysylation is critical for the stimulatory effect of EF-P on peptide-bond formation. The lysylation moiety may extend toward the peptidyltransferase center and stabilize the terminal 3-CCA end of the tRNA. Hydroxylation of the C5 position on Lys-34 may allow additional potential stabilizing hydrogen-bond interactions with the P-tRNA.

It localises to the cytoplasm. It functions in the pathway protein biosynthesis; polypeptide chain elongation. In terms of biological role, involved in peptide bond synthesis. Alleviates ribosome stalling that occurs when 3 or more consecutive Pro residues or the sequence PPG is present in a protein, possibly by augmenting the peptidyl transferase activity of the ribosome. Modification of Lys-34 is required for alleviation. In Vibrio cholerae serotype O1 (strain ATCC 39541 / Classical Ogawa 395 / O395), this protein is Elongation factor P.